The primary structure comprises 347 residues: MRVADFHFDLPEALIARHPLPERRASRLLALDGPTGSLAHKQFADLLDYLRPGDLMVFNNTRVIPARLFGQKESGGKLEVLVERVLDQHRVLAHVRASKAPKPGTRILVEGGGSAEMLQRHDALFELAFAEPVLPLLERVGHMPLPPYIDRPDDAADRERYQTVYAQRAGAVAAPTAGLHFDEALLEAIRAKGVDTAFVTLHVGAGTFQPVRVERIEDHVMHREWLEVGQDVVDAVAACRARGGRVVAVGTTSVRSLESAARDGELKPFSGDTDIFIYPGRPFHVVDALVTNFHLPESTLLMLVSAFAGYPETMAAYAAAVEQGYRFFSYGDAMFITRNPAPRGPED.

Belongs to the QueA family. Monomer.

Its subcellular location is the cytoplasm. It catalyses the reaction 7-aminomethyl-7-carbaguanosine(34) in tRNA + S-adenosyl-L-methionine = epoxyqueuosine(34) in tRNA + adenine + L-methionine + 2 H(+). It participates in tRNA modification; tRNA-queuosine biosynthesis. In terms of biological role, transfers and isomerizes the ribose moiety from AdoMet to the 7-aminomethyl group of 7-deazaguanine (preQ1-tRNA) to give epoxyqueuosine (oQ-tRNA). The sequence is that of S-adenosylmethionine:tRNA ribosyltransferase-isomerase from Pseudomonas paraeruginosa (strain DSM 24068 / PA7) (Pseudomonas aeruginosa (strain PA7)).